The following is a 141-amino-acid chain: Large ribosomal subunit protein uL11 (141 aa).

Belongs to the universal ribosomal protein uL11 family. As to quaternary structure, part of the ribosomal stalk of the 50S ribosomal subunit. Interacts with L10 and the large rRNA to form the base of the stalk. L10 forms an elongated spine to which L12 dimers bind in a sequential fashion forming a multimeric L10(L12)X complex. In terms of processing, one or more lysine residues are methylated.

In terms of biological role, forms part of the ribosomal stalk which helps the ribosome interact with GTP-bound translation factors. This is Large ribosomal subunit protein uL11 from Lactobacillus acidophilus (strain ATCC 700396 / NCK56 / N2 / NCFM).